We begin with the raw amino-acid sequence, 86 residues long: Anti-adapter protein IraP (86 aa).

The stretch at 1-36 (MKNLISELLLRLAQKEEESKELVAQVEALEIIVTAM) forms a coiled coil.

This sequence belongs to the IraP family. In terms of assembly, interacts with RssB.

The protein resides in the cytoplasm. Inhibits RpoS proteolysis by regulating RssB activity, thereby increasing the stability of the sigma stress factor RpoS especially during phosphate starvation, but also in stationary phase and during nitrogen starvation. Its effect on RpoS stability is due to its interaction with RssB, which probably blocks the interaction of RssB with RpoS, and the consequent delivery of the RssB-RpoS complex to the ClpXP protein degradation pathway. This Citrobacter koseri (strain ATCC BAA-895 / CDC 4225-83 / SGSC4696) protein is Anti-adapter protein IraP.